Here is a 57-residue protein sequence, read N- to C-terminus: MKRQKRDRQSRAHTRGYQAGISGRSKEHCPYQIDAIKSQWLGGWREAIEDKQQGLFK.

A compositionally biased stretch (basic residues) spans 1 to 14 (MKRQKRDRQSRAHT). The disordered stretch occupies residues 1-24 (MKRQKRDRQSRAHTRGYQAGISGR).

This sequence belongs to the ribosome modulation factor family.

The protein localises to the cytoplasm. In terms of biological role, during stationary phase, converts 70S ribosomes to an inactive dimeric form (100S ribosomes). This Colwellia psychrerythraea (strain 34H / ATCC BAA-681) (Vibrio psychroerythus) protein is Ribosome modulation factor 1.